A 232-amino-acid chain; its full sequence is RNA chaperone ProQ (232 aa).

Residues 105 to 182 form a disordered region; the sequence is EAKARVQAQR…REEQHTPVSD (78 aa). Residues 117–136 are compositionally biased toward basic and acidic residues; it reads QQAKKREAAAAAGEKEDAPR. Residues 137–146 show a composition bias toward basic residues; that stretch reads RERKPRPTTP. Positions 147–177 are enriched in basic and acidic residues; it reads RRKEGAERKPRAQKPVEKAPKTVKAPREEQH.

Belongs to the ProQ family.

The protein localises to the cytoplasm. In terms of biological role, RNA chaperone with significant RNA binding, RNA strand exchange and RNA duplexing activities. May regulate ProP activity through an RNA-based, post-transcriptional mechanism. The sequence is that of RNA chaperone ProQ from Shigella boydii serotype 18 (strain CDC 3083-94 / BS512).